Reading from the N-terminus, the 524-residue chain is GMP synthase [glutamine-hydrolyzing] (524 aa).

One can recognise a Glutamine amidotransferase type-1 domain in the interval 9 to 207 (RILILDFGSQ…VIHICQCIPN (199 aa)). Catalysis depends on cysteine 86, which acts as the Nucleophile. Residues histidine 181 and glutamate 183 contribute to the active site. A GMPS ATP-PPase domain is found at 208-399 (WTTKHIIEDS…LGLPADLIYR (192 aa)). 235–241 (SGGVDSA) serves as a coordination point for ATP.

In terms of assembly, homodimer.

It catalyses the reaction XMP + L-glutamine + ATP + H2O = GMP + L-glutamate + AMP + diphosphate + 2 H(+). It functions in the pathway purine metabolism; GMP biosynthesis; GMP from XMP (L-Gln route): step 1/1. Catalyzes the synthesis of GMP from XMP. This is GMP synthase [glutamine-hydrolyzing] from Coxiella burnetii (strain RSA 331 / Henzerling II).